The chain runs to 227 residues: MSVLHNDWAPIVEEEYEKTYYLKLKQFLMEEYRTKTVYPDEGDIFNALQLTPFGKVKAVILGQDPYHGPGQAHGLSFSVKPGVKTPPSLKNIFKELNGDLGYDIPEHGYLNQWAQEGVLMLNTVLTVRRGEPNSHKGAGWEQFTDQIIKRLNERETAMVFILWGKNAQEKEALITNPQHHIIKSPHPSPFSAHRGFFGSHPFSKTNDFLRGVGIEEINWNIEKSSDL.

Catalysis depends on aspartate 64, which acts as the Proton acceptor.

The protein belongs to the uracil-DNA glycosylase (UDG) superfamily. UNG family.

Its subcellular location is the cytoplasm. The catalysed reaction is Hydrolyzes single-stranded DNA or mismatched double-stranded DNA and polynucleotides, releasing free uracil.. In terms of biological role, excises uracil residues from the DNA which can arise as a result of misincorporation of dUMP residues by DNA polymerase or due to deamination of cytosine. This chain is Uracil-DNA glycosylase, found in Alkaliphilus metalliredigens (strain QYMF).